A 218-amino-acid chain; its full sequence is Histone H1.1 (218 aa).

A disordered region spans residues 1–42; sequence MSEVALPAPAASTSPEKPSAGKKAKKPAKAAAAAKKKPAGPS. N-acetylserine is present on serine 2. Phosphoserine is present on residues serine 2 and serine 12. The residue at position 17 (lysine 17) is an N6-acetyllysine. Residues 20 to 38 show a composition bias toward basic residues; sequence AGKKAKKPAKAAAAAKKKP. At lysine 37 the chain carries N6-(beta-hydroxybutyryl)lysine. One can recognise an H15 domain in the interval 39–112; that stretch reads AGPSVSELIV…GASGSFKLNK (74 aa). The residue at position 44 (serine 44) is a Phosphoserine. Lysine 55 carries the N6-(beta-hydroxybutyryl)lysine modification. The residue at position 57 (arginine 57) is a Citrulline. Lysine 67 carries the post-translational modification N6-(beta-hydroxybutyryl)lysine. Lysine 78 bears the N6-acetyllysine mark. Lysine 88 is subject to N6-(beta-hydroxybutyryl)lysine. Lysine 93 carries the post-translational modification N6-(beta-hydroxybutyryl)lysine; alternate. Lysine 93 carries the post-translational modification N6-acetyllysine; alternate. Serine 107 carries the post-translational modification Phosphoserine; by PKC. The residue at position 109 (lysine 109) is an N6-(beta-hydroxybutyryl)lysine. The tract at residues 116 to 218 is disordered; that stretch reads SVDAKPTATK…KPKKAAPKKK (103 aa). The segment covering 119 to 149 has biased composition (low complexity); the sequence is AKPTATKVATKTKVTSASKKPKKASGAAAAK. Lysine 125 carries the N6-acetyllysine modification. Composition is skewed to basic residues over residues 150-183 and 190-218; these read KSVKTPKKARKSVLTKKSSKSPKKPKAVKPKKVA and KAVKPKGAKVKVTKPKTAAKPKKAAPKKK. Threonine 206 carries the phosphothreonine modification.

Belongs to the histone H1/H5 family. Interacts with DFFB. Post-translationally, H1 histones are progressively phosphorylated during the cell cycle, becoming maximally phosphorylated during late G2 phase and M phase, and being dephosphorylated sharply thereafter. Citrullination at Arg-57 (H1R54ci) by PADI4 takes place within the DNA-binding site of H1 and results in its displacement from chromatin and global chromatin decondensation, thereby promoting pluripotency and stem cell maintenance.

The protein localises to the nucleus. The protein resides in the chromosome. Functionally, H1 histones bind to linker DNA between nucleosomes forming the macromolecular structure known as the chromatin fiber. H1 histones are necessary for the condensation of nucleosome chains into higher-order structured fibers. Also acts as a regulator of individual gene transcription through chromatin remodeling. This Bos taurus (Bovine) protein is Histone H1.1.